A 490-amino-acid chain; its full sequence is Aspartyl/glutamyl-tRNA(Asn/Gln) amidotransferase subunit B (490 aa).

It belongs to the GatB/GatE family. GatB subfamily. As to quaternary structure, heterotrimer of A, B and C subunits.

It carries out the reaction L-glutamyl-tRNA(Gln) + L-glutamine + ATP + H2O = L-glutaminyl-tRNA(Gln) + L-glutamate + ADP + phosphate + H(+). It catalyses the reaction L-aspartyl-tRNA(Asn) + L-glutamine + ATP + H2O = L-asparaginyl-tRNA(Asn) + L-glutamate + ADP + phosphate + 2 H(+). Functionally, allows the formation of correctly charged Asn-tRNA(Asn) or Gln-tRNA(Gln) through the transamidation of misacylated Asp-tRNA(Asn) or Glu-tRNA(Gln) in organisms which lack either or both of asparaginyl-tRNA or glutaminyl-tRNA synthetases. The reaction takes place in the presence of glutamine and ATP through an activated phospho-Asp-tRNA(Asn) or phospho-Glu-tRNA(Gln). The sequence is that of Aspartyl/glutamyl-tRNA(Asn/Gln) amidotransferase subunit B from Symbiobacterium thermophilum (strain DSM 24528 / JCM 14929 / IAM 14863 / T).